Here is a 394-residue protein sequence, read N- to C-terminus: Phosphopentomutase (394 aa).

The Mn(2+) site is built by aspartate 13, aspartate 286, histidine 291, aspartate 327, histidine 328, and histidine 339.

It belongs to the phosphopentomutase family. Mn(2+) serves as cofactor.

It is found in the cytoplasm. It carries out the reaction 2-deoxy-alpha-D-ribose 1-phosphate = 2-deoxy-D-ribose 5-phosphate. The catalysed reaction is alpha-D-ribose 1-phosphate = D-ribose 5-phosphate. It participates in carbohydrate degradation; 2-deoxy-D-ribose 1-phosphate degradation; D-glyceraldehyde 3-phosphate and acetaldehyde from 2-deoxy-alpha-D-ribose 1-phosphate: step 1/2. Functionally, isomerase that catalyzes the conversion of deoxy-ribose 1-phosphate (dRib-1-P) and ribose 1-phosphate (Rib-1-P) to deoxy-ribose 5-phosphate (dRib-5-P) and ribose 5-phosphate (Rib-5-P), respectively. This chain is Phosphopentomutase, found in Bacillus cereus (strain G9842).